The chain runs to 689 residues: Transmembrane protein 214 (689 aa).

2 disordered regions span residues 1-37 (MATK…NRRA) and 70-107 (RQNK…KQGR). Residue Ala2 is modified to N-acetylalanine. Residues 20 to 31 (PGVGAGAGGRGG) are compositionally biased toward gly residues. 2 N-linked (GlcNAc...) asparagine glycosylation sites follow: Asn269 and Asn307. Transmembrane regions (helical) follow at residues 480–500 (LPWT…LCHD) and 616–636 (LPLL…LEAL).

Belongs to the TMEM214 family. Constitutively interacts with CASP4; required for the localization of procaspase 4 to the ER.

It is found in the endoplasmic reticulum membrane. Critical mediator, in cooperation with CASP4, of endoplasmic reticulum-stress induced apoptosis. Required or the activation of CASP4 following endoplasmic reticulum stress. The polypeptide is Transmembrane protein 214 (TMEM214) (Homo sapiens (Human)).